A 150-amino-acid chain; its full sequence is Large ribosomal subunit protein bL9 (150 aa).

This sequence belongs to the bacterial ribosomal protein bL9 family.

In terms of biological role, binds to the 23S rRNA. The sequence is that of Large ribosomal subunit protein bL9 from Pectobacterium atrosepticum (strain SCRI 1043 / ATCC BAA-672) (Erwinia carotovora subsp. atroseptica).